A 962-amino-acid chain; its full sequence is Insulin-degrading enzyme homolog (962 aa).

Residues Met1 to Gln10 are compositionally biased toward low complexity. Residues Met1–Ile21 form a disordered region. His74 is a Zn(2+) binding site. The Proton acceptor role is filled by Glu77. 2 residues coordinate Zn(2+): His78 and Glu155.

The protein belongs to the peptidase M16 family. Homodimer. Requires Zn(2+) as cofactor.

The protein resides in the cytoplasm. This Dictyostelium discoideum (Social amoeba) protein is Insulin-degrading enzyme homolog.